A 231-amino-acid polypeptide reads, in one-letter code: Small proline-rich protein 3 (231 aa).

Residues 1–104 are disordered; that stretch reads MSSYQQKQPF…GSGYSVVPQP (104 aa). Ser-2 is modified (N-acetylserine). Repeat copies occupy residues 55–62, 63–70, 71–78, 79–86, 87–94, 95–102, 103–110, 111–118, 119–126, 127–134, 135–142, 143–150, 151–158, 159–166, 167–174, 175–182, 183–190, 191–198, 199–206, 207–214, and 215–222. The 21 X 8 AA approximate tandem repeats stretch occupies residues 55–222; sequence EQGYVKIPEQ…VQEPNPSIVT (168 aa). Positions 80 to 94 are enriched in polar residues; sequence SGNTKVPESGCTSVP. Positions 188 to 231 are disordered; that stretch reads KVPESGCTSVPGPGYPTVPQPGYTKVQEPNPSIVTPGLSQKKTK. The span at 214-231 shows a compositional bias: polar residues; the sequence is QEPNPSIVTPGLSQKKTK.

The protein belongs to the cornifin (SPRR) family. As to expression, suprabasal layers of the squamous epithelia of esophagus, tongue and oral mucosa.

Its subcellular location is the cytoplasm. Functionally, can serve as a substrate in transglutaminase-catalyzed cross linking reactions and can function as a cross-linked envelope precursor. The chain is Small proline-rich protein 3 (SPRR3) from Oryctolagus cuniculus (Rabbit).